Here is a 326-residue protein sequence, read N- to C-terminus: BTB/POZ domain-containing protein At1g21780 (326 aa).

Residues 161-228 (TDVIIHTADG…LYGNITQEEF (68 aa)) enclose the BTB domain.

In terms of assembly, homodimer. Interacts with CUL3A and CUL3B.

Its pathway is protein modification; protein ubiquitination. In terms of biological role, may act as a substrate-specific adapter of an E3 ubiquitin-protein ligase complex (CUL3-RBX1-BTB) which mediates the ubiquitination and subsequent proteasomal degradation of target proteins. The protein is BTB/POZ domain-containing protein At1g21780 of Arabidopsis thaliana (Mouse-ear cress).